Here is a 740-residue protein sequence, read N- to C-terminus: Alpha-1,6-mannosylglycoprotein 6-beta-N-acetylglucosaminyltransferase A (740 aa).

Residues 1–13 are Cytoplasmic-facing; the sequence is MAFFSPWKLSSQK. The helical; Signal-anchor for type II membrane protein transmembrane segment at 14–30 threads the bilayer; it reads LGFFLVTFGFIWGMMLL. At 31 to 740 the chain is on the lumenal side; that stretch reads HFTIQQRTQP…GQVALCKDCL (710 aa). 3 N-linked (GlcNAc...) asparagine glycosylation sites follow: asparagine 109, asparagine 114, and asparagine 117. 9 disulfides stabilise this stretch: cysteine 144–cysteine 182, cysteine 155–cysteine 195, cysteine 171–cysteine 337, cysteine 371–cysteine 625, cysteine 648–cysteine 723, cysteine 652–cysteine 725, cysteine 659–cysteine 712, cysteine 680–cysteine 701, and cysteine 736–cysteine 739. The segment at 212 to 740 is sufficient for catalytic activity; it reads NSLAEIRTDF…GQVALCKDCL (529 aa). A glycan (N-linked (GlcNAc...) asparagine) is linked at asparagine 333. 377 to 378 is a binding site for substrate; that stretch reads DS. 2 N-linked (GlcNAc...) asparagine glycosylation sites follow: asparagine 432 and asparagine 446. UDP-N-acetyl-alpha-D-glucosamine is bound at residue glutamate 525. Lysine 553 contributes to the substrate binding site.

Belongs to the glycosyltransferase 18 family. N-glycosylated. Post-translationally, a secreted form is released from the membrane after cleavage by gamma-secretase. As to expression, detected in cerebellum.

Its subcellular location is the golgi apparatus membrane. It is found in the perikaryon. The protein localises to the secreted. It catalyses the reaction N(4)-{beta-D-GlcNAc-(1-&gt;2)-[beta-D-GlcNAc-(1-&gt;4)]-alpha-D-Man-(1-&gt;3)-[beta-D-GlcNAc-(1-&gt;2)-alpha-D-Man-(1-&gt;6)]-beta-D-Man-(1-&gt;4)-beta-D-GlcNAc-(1-&gt;4)-beta-D-GlcNAc}-L-asparaginyl-[protein] + UDP-N-acetyl-alpha-D-glucosamine = N(4)-{beta-D-GlcNAc-(1-&gt;2)-[beta-D-GlcNAc-(1-&gt;4)]-alpha-D-Man-(1-&gt;3)-[beta-D-GlcNAc-(1-&gt;2)-[beta-D-GlcNAc-(1-&gt;6)]-alpha-D-Man-(1-&gt;6)]-beta-D-Man-(1-&gt;4)-beta-D-GlcNAc-(1-&gt;4)-beta-D-GlcNAc}-L-asparaginyl-[protein] + UDP + H(+). It functions in the pathway protein modification; protein glycosylation. Functionally, catalyzes the addition of N-acetylglucosamine (GlcNAc) in beta 1-6 linkage to the alpha-linked mannose of biantennary N-linked oligosaccharides. Catalyzes an important step in the biosynthesis of branched, complex-type N-glycans, such as those found on EGFR, TGFR (TGF-beta receptor) and CDH2. Via its role in the biosynthesis of complex N-glycans, plays an important role in the activation of cellular signaling pathways, reorganization of the actin cytoskeleton, cell-cell adhesion and cell migration. MGAT5-dependent EGFR N-glycosylation enhances the interaction between EGFR and LGALS3 and thereby prevents rapid EGFR endocytosis and prolongs EGFR signaling. Required for efficient interaction between TGFB1 and its receptor. Enhances activation of intracellular signaling pathways by several types of growth factors, including FGF2, PDGF, IGF, TGFB1 and EGF. MGAT5-dependent CDH2 N-glycosylation inhibits CDH2-mediated homotypic cell-cell adhesion and contributes to the regulation of downstream signaling pathways. Promotes cell migration. Contributes to the regulation of the inflammatory response. MGAT5-dependent TCR N-glycosylation enhances the interaction between TCR and LGALS3, limits agonist-induced TCR clustering, and thereby dampens TCR-mediated responses to antigens. Required for normal leukocyte evasation and accumulation at sites of inflammation. Inhibits attachment of monocytes to the vascular endothelium and subsequent monocyte diapedesis. In terms of biological role, promotes proliferation of umbilical vein endothelial cells and angiogenesis, at least in part by promoting the release of the growth factor FGF2 from the extracellular matrix. This is Alpha-1,6-mannosylglycoprotein 6-beta-N-acetylglucosaminyltransferase A (Mgat5) from Mus musculus (Mouse).